The primary structure comprises 396 residues: Elongation factor Tu 1 (396 aa).

The region spanning 10 to 206 is the tr-type G domain; it reads KLHVNVGTIG…ALDTFIPDPT (197 aa). Residues 19–26 are G1; sequence GHVDHGKT. Residue 19-26 participates in GTP binding; it reads GHVDHGKT. Position 26 (Thr-26) interacts with Mg(2+). Residues 60 to 64 are G2; sequence GITIS. Residues 81-84 form a G3 region; that stretch reads DCPG. GTP is bound by residues 81–85 and 136–139; these read DCPGH and NKAD. The tract at residues 136–139 is G4; the sequence is NKAD. Positions 174–176 are G5; that stretch reads SAR.

The protein belongs to the TRAFAC class translation factor GTPase superfamily. Classic translation factor GTPase family. EF-Tu/EF-1A subfamily. As to quaternary structure, monomer.

Its subcellular location is the cytoplasm. The catalysed reaction is GTP + H2O = GDP + phosphate + H(+). Functionally, GTP hydrolase that promotes the GTP-dependent binding of aminoacyl-tRNA to the A-site of ribosomes during protein biosynthesis. This is Elongation factor Tu 1 from Xanthomonas campestris pv. campestris (strain B100).